Reading from the N-terminus, the 645-residue chain is 1,4-alpha-glucan branching enzyme GlgB (645 aa).

D309 acts as the Nucleophile in catalysis. The active-site Proton donor is E352. The interval 619 to 645 is disordered; it reads VKTRKGSKKQDGSKTKVRSNVTSRGKR. A compositionally biased stretch (polar residues) spans 636–645; it reads RSNVTSRGKR.

Belongs to the glycosyl hydrolase 13 family. GlgB subfamily. Monomer.

The enzyme catalyses Transfers a segment of a (1-&gt;4)-alpha-D-glucan chain to a primary hydroxy group in a similar glucan chain.. Its pathway is glycan biosynthesis; glycogen biosynthesis. Catalyzes the formation of the alpha-1,6-glucosidic linkages in glycogen by scission of a 1,4-alpha-linked oligosaccharide from growing alpha-1,4-glucan chains and the subsequent attachment of the oligosaccharide to the alpha-1,6 position. The sequence is that of 1,4-alpha-glucan branching enzyme GlgB from Bacillus cereus (strain B4264).